A 315-amino-acid polypeptide reads, in one-letter code: DNA-directed RNA polymerase subunit alpha (315 aa).

Residues 1–229 are alpha N-terminal domain (alpha-NTD); that stretch reads MLDSKLKAPV…EHLTYFSNPQ (229 aa). An alpha C-terminal domain (alpha-CTD) region spans residues 247–315; that stretch reads EQEEELDLPL…LEKKGFTLKE (69 aa).

This sequence belongs to the RNA polymerase alpha chain family. In terms of assembly, homodimer. The RNAP catalytic core consists of 2 alpha, 1 beta, 1 beta' and 1 omega subunit. When a sigma factor is associated with the core the holoenzyme is formed, which can initiate transcription.

The enzyme catalyses RNA(n) + a ribonucleoside 5'-triphosphate = RNA(n+1) + diphosphate. DNA-dependent RNA polymerase catalyzes the transcription of DNA into RNA using the four ribonucleoside triphosphates as substrates. This is DNA-directed RNA polymerase subunit alpha from Thermus thermophilus (strain ATCC BAA-163 / DSM 7039 / HB27).